Consider the following 265-residue polypeptide: Type 1 encapsulin shell protein (265 aa).

FMN-binding positions include 79-81 (RAT), Trp-87, and 90-94 (DNLER). The tract at residues 184–189 (EAGHYP) is pore-forming loop. Glu-235 contributes to the FMN binding site.

Belongs to the encapsulin family. Family 1 subfamily. As to quaternary structure, homomultimeric. This encapsulin nanocompartment is formed by 60 subunits; monomers form 12 pentamers which assemble to form shells. There are 12 pores where the pentamers meet as well as 3-fold axis channels and dimer channels; none are larger than 3-4 Angstroms in diameter. The N-terminus of the protein is inside the shell, the C-terminus is outside. Probably 3, 4 or 5 Flp cargo decamers bind inside the encapulin nanocompartment. FMN serves as cofactor.

It localises to the encapsulin nanocompartment. Its activity is regulated as follows. Proteolysis activated by calcium and cobalt. In terms of biological role, shell component of a type 1 encapsulin nanocompartment. Assembles into proteinaceous shells 23-24 nm in diameter with 2-2.5 nm thick walls. Cargo protein Flp (ferritin-like protein, probably stores iron) is targeted to the interior via its C-terminal extension; empty intact shells can be isolated in the absence of cargo protein. Fe(2+) may be able to pass though the 5-fold and dimer channels in the protein shell. Protease that exhibits activity toward chymotrypsin and trypsin substrates. Probably does not have antibacterial activity. This chain is Type 1 encapsulin shell protein, found in Thermotoga maritima (strain ATCC 43589 / DSM 3109 / JCM 10099 / NBRC 100826 / MSB8).